The sequence spans 383 residues: Protein FAM217B (383 aa).

Disordered regions lie at residues 1-70 (MNAG…CQGA), 89-115 (ADED…PPDL), 200-222 (KAKG…KSPG), 232-251 (SKPL…RKKA), 284-325 (QTLE…HIRV), and 338-383 (SCKA…YKLK). Residues 8 to 43 (NKVQHSKNSSGKRQSKSQVPHASSQPRSSLTAVTQP) are compositionally biased toward polar residues. Basic and acidic residues predominate over residues 44–56 (TEEKLKESISPEA). Positions 374 to 383 (GVKQNTYKLK) are enriched in polar residues.

This sequence belongs to the FAM217 family.

The protein is Protein FAM217B (FAM217B) of Homo sapiens (Human).